Reading from the N-terminus, the 367-residue chain is S-adenosylmethionine decarboxylase proenzyme 3 (367 aa).

Catalysis depends on residues E9 and E12. The active-site Schiff-base intermediate with substrate; via pyruvic acid is the S69. At S69 the chain carries Pyruvic acid (Ser); by autocatalysis. C83 functions as the Proton donor; for catalytic activity in the catalytic mechanism. Active-site proton acceptor; for processing activity residues include S234 and H247.

It belongs to the eukaryotic AdoMetDC family. Requires pyruvate as cofactor. In terms of processing, is synthesized initially as an inactive proenzyme. Formation of the active enzyme involves a self-maturation process in which the active site pyruvoyl group is generated from an internal serine residue via an autocatalytic post-translational modification. Two non-identical subunits are generated from the proenzyme in this reaction, and the pyruvate is formed at the N-terminus of the alpha chain, which is derived from the carboxyl end of the proenzyme. The post-translation cleavage follows an unusual pathway, termed non-hydrolytic serinolysis, in which the side chain hydroxyl group of the serine supplies its oxygen atom to form the C-terminus of the beta chain, while the remainder of the serine residue undergoes an oxidative deamination to produce ammonia and the pyruvoyl group blocking the N-terminus of the alpha chain.

The enzyme catalyses S-adenosyl-L-methionine + H(+) = S-adenosyl 3-(methylsulfanyl)propylamine + CO2. It functions in the pathway amine and polyamine biosynthesis; S-adenosylmethioninamine biosynthesis; S-adenosylmethioninamine from S-adenosyl-L-methionine: step 1/1. This Brassica juncea (Indian mustard) protein is S-adenosylmethionine decarboxylase proenzyme 3 (SAMDC3).